The following is a 529-amino-acid chain: Probable E3 ubiquitin-protein ligase MGRN1 (529 aa).

The segment at 275–314 (ECVVCLSDLRDTLILPCRHLCLCNACADTLRYQANNCPIC) adopts an RING-type zinc-finger fold. Disordered regions lie at residues 341 to 362 (SPVL…IPPG) and 396 to 529 (EMGD…VEEC). 2 stretches are compositionally biased toward polar residues: residues 449 to 463 (AQPQ…SPSE) and 477 to 487 (NSGSESRSLGV). The segment covering 501 to 511 (SSLSQSESDPS) has biased composition (low complexity). Residues 520-529 (ESWSTAVEEC) are compositionally biased toward polar residues.

Post-translationally, autoubiquitinated in vitro.

It catalyses the reaction S-ubiquitinyl-[E2 ubiquitin-conjugating enzyme]-L-cysteine + [acceptor protein]-L-lysine = [E2 ubiquitin-conjugating enzyme]-L-cysteine + N(6)-ubiquitinyl-[acceptor protein]-L-lysine.. It functions in the pathway protein modification; protein ubiquitination. In terms of biological role, E3 ubiquitin-protein ligase. Also acts as a negative regulator of hedgehog signaling. The chain is Probable E3 ubiquitin-protein ligase MGRN1 (mgrn1) from Danio rerio (Zebrafish).